The sequence spans 92 residues: Small ribosomal subunit protein uS19c (92 aa).

It belongs to the universal ribosomal protein uS19 family.

The protein resides in the plastid. The protein localises to the chloroplast. Functionally, protein S19 forms a complex with S13 that binds strongly to the 16S ribosomal RNA. In Illicium oligandrum (Star anise), this protein is Small ribosomal subunit protein uS19c.